A 317-amino-acid chain; its full sequence is Ferrochelatase (317 aa).

2 residues coordinate Fe cation: His192 and Glu271.

This sequence belongs to the ferrochelatase family.

Its subcellular location is the cytoplasm. It catalyses the reaction heme b + 2 H(+) = protoporphyrin IX + Fe(2+). It participates in porphyrin-containing compound metabolism; protoheme biosynthesis; protoheme from protoporphyrin-IX: step 1/1. Catalyzes the ferrous insertion into protoporphyrin IX. The chain is Ferrochelatase from Geobacter metallireducens (strain ATCC 53774 / DSM 7210 / GS-15).